The sequence spans 502 residues: NAD(P)H-quinone oxidoreductase subunit 2, chloroplastic (502 aa).

Helical transmembrane passes span 15–35, 42–62, 79–99, 108–128, 132–152, 167–187, 210–230, 253–275, 278–298, 307–327, 334–354, 375–395, 413–433, and 468–488; these read VLPEAIIICSSLFILIIDLIF, VLPYMAILGLILSMLSLLFQW, LSIAFRLLIALSSMLCVLLSI, TLSEFLVIFLTATLGAMLLCG, ILMIFLSLETLGLCSYILTGY, LLIGAASSSILLYGFSLLYGL, LASLVALALIIVGISFKIAAA, VSSKAAGLMLATRIMTILFPYII, WHNIFQILAILSMAIGNIIAI, LGYSSIAQAGFLLVGLLAGNI, LVYMLIYLFMNLGAFACVILF, ILALCLSICLLSLGGIPPFGG, LLVFVGLLTSVISIFYYIKII, and ILICVIGTTISGIFVNPIISI.

It belongs to the complex I subunit 2 family. In terms of assembly, NDH is composed of at least 16 different subunits, 5 of which are encoded in the nucleus.

It localises to the plastid. Its subcellular location is the chloroplast thylakoid membrane. The catalysed reaction is a plastoquinone + NADH + (n+1) H(+)(in) = a plastoquinol + NAD(+) + n H(+)(out). It carries out the reaction a plastoquinone + NADPH + (n+1) H(+)(in) = a plastoquinol + NADP(+) + n H(+)(out). In terms of biological role, NDH shuttles electrons from NAD(P)H:plastoquinone, via FMN and iron-sulfur (Fe-S) centers, to quinones in the photosynthetic chain and possibly in a chloroplast respiratory chain. The immediate electron acceptor for the enzyme in this species is believed to be plastoquinone. Couples the redox reaction to proton translocation, and thus conserves the redox energy in a proton gradient. The chain is NAD(P)H-quinone oxidoreductase subunit 2, chloroplastic from Mesostigma viride (Green alga).